Consider the following 260-residue polypeptide: Activator of 90 kDa heat shock protein ATPase homolog 2 (260 aa).

This sequence belongs to the AHA1 family.

Functionally, co-chaperone that stimulates HSP90 ATPase activity. The polypeptide is Activator of 90 kDa heat shock protein ATPase homolog 2 (AHSA2) (Bos taurus (Bovine)).